Here is a 447-residue protein sequence, read N- to C-terminus: GTPase Der (447 aa).

2 consecutive EngA-type G domains span residues 4-165 (QIIT…PEEE) and 180-357 (LQIV…KIWN). GTP is bound by residues 10 to 17 (GRPNVGKS), 57 to 61 (DTPGL), 119 to 122 (NKCE), 186 to 193 (GRPNAGKS), 233 to 237 (DTAGL), and 298 to 301 (NKWD). The 86-residue stretch at 358–443 (KKITTSKLNE…PIRFTYVKTK (86 aa)) folds into the KH-like domain.

Belongs to the TRAFAC class TrmE-Era-EngA-EngB-Septin-like GTPase superfamily. EngA (Der) GTPase family. Associates with the 50S ribosomal subunit.

In terms of biological role, GTPase that plays an essential role in the late steps of ribosome biogenesis. In Rickettsia rickettsii (strain Sheila Smith), this protein is GTPase Der.